A 490-amino-acid polypeptide reads, in one-letter code: Glutamate--tRNA ligase 1 (490 aa).

The short motif at Pro-27–Gly-37 is the 'HIGH' region element. A 'KMSKS' region motif is present at residues Lys-254–Arg-258. Lys-257 contributes to the ATP binding site.

Belongs to the class-I aminoacyl-tRNA synthetase family. Glutamate--tRNA ligase type 1 subfamily. In terms of assembly, monomer.

The protein resides in the cytoplasm. The catalysed reaction is tRNA(Glu) + L-glutamate + ATP = L-glutamyl-tRNA(Glu) + AMP + diphosphate. In terms of biological role, catalyzes the attachment of glutamate to tRNA(Glu) in a two-step reaction: glutamate is first activated by ATP to form Glu-AMP and then transferred to the acceptor end of tRNA(Glu). The protein is Glutamate--tRNA ligase 1 of Sphingopyxis alaskensis (strain DSM 13593 / LMG 18877 / RB2256) (Sphingomonas alaskensis).